Here is a 426-residue protein sequence, read N- to C-terminus: Serine--tRNA ligase (426 aa).

Threonine 233 to glutamate 235 provides a ligand contact to L-serine. Residue arginine 264–glutamate 266 coordinates ATP. L-serine is bound at residue glutamate 287. Glutamate 351–serine 354 is an ATP binding site. Serine 387 is a binding site for L-serine.

The protein belongs to the class-II aminoacyl-tRNA synthetase family. Type-1 seryl-tRNA synthetase subfamily. As to quaternary structure, homodimer. The tRNA molecule binds across the dimer.

It localises to the cytoplasm. It catalyses the reaction tRNA(Ser) + L-serine + ATP = L-seryl-tRNA(Ser) + AMP + diphosphate + H(+). The catalysed reaction is tRNA(Sec) + L-serine + ATP = L-seryl-tRNA(Sec) + AMP + diphosphate + H(+). The protein operates within aminoacyl-tRNA biosynthesis; selenocysteinyl-tRNA(Sec) biosynthesis; L-seryl-tRNA(Sec) from L-serine and tRNA(Sec): step 1/1. In terms of biological role, catalyzes the attachment of serine to tRNA(Ser). Is also able to aminoacylate tRNA(Sec) with serine, to form the misacylated tRNA L-seryl-tRNA(Sec), which will be further converted into selenocysteinyl-tRNA(Sec). The protein is Serine--tRNA ligase of Clostridium botulinum (strain Kyoto / Type A2).